The chain runs to 474 residues: Calcium/calmodulin-dependent protein kinase type IV (474 aa).

Residues Ser-11 and Ser-12 each carry the phosphoserine; by autocatalysis modification. One can recognise a Protein kinase domain in the interval 42-296 (FEVESELGRG…TFQALQHPWV (255 aa)). ATP contacts are provided by residues 48–56 (LGRGATSIV) and Lys-71. Residue Thr-53 is glycosylated (O-linked (GlcNAc) threonine). Ser-54 carries O-linked (GlcNAc) serine glycosylation. Ser-133 carries O-linked (GlcNAc) serine glycosylation. Asp-160 (proton acceptor) is an active-site residue. Ser-185 carries an O-linked (GlcNAc) serine glycan. Phosphothreonine; by CaMKK1 and CaMKK2 is present on Thr-196. The autoinhibitory domain stretch occupies residues 297–336 (TGKAANFVHMDTAQKKLQEFNARRKLKAAVKAVVASSRLG). Residues 302-319 (NFVHMDTAQKKLQEFNAR) are PP2A-binding. Residues 318 to 337 (ARRKLKAAVKAVVASSRLGS) are calmodulin-binding. Ser-332 bears the Phosphoserine; by autocatalysis mark. A disordered region spans residues 336 to 474 (GSASSSHTNI…PQQDAILPEY (139 aa)). Ser-337 bears the Phosphoserine mark. O-linked (GlcNAc) serine glycosylation is found at Ser-340, Ser-341, and Ser-352. Positions 342 to 356 (HTNIQESNKASSEAQ) are enriched in polar residues. A compositionally biased stretch (basic and acidic residues) spans 360-392 (DGKDKTDPLENKMQAGDHEAAKAAADETMKLQS). The segment covering 393 to 413 (EEVEEEEGVKEEEEEEEEEEE) has biased composition (acidic residues). Over residues 431 to 454 (QEMKRNSEETLKSVEEEMDPKAEE) the composition is skewed to basic and acidic residues. Phosphoserine occurs at positions 437 and 443.

This sequence belongs to the protein kinase superfamily. CAMK Ser/Thr protein kinase family. CaMK subfamily. In terms of assembly, monomer. Interacts with protein phosphatase 2A (PPP2CA/PPP2CB); the interaction is mutually exclusive with binding to Ca(2+)/calmodulin. In terms of processing, phosphorylated by CaMKK1 and CaMKK2 on Thr-196. Dephosphorylated by protein phosphatase 2A. Autophosphorylated on Ser-11 and Ser-12. Post-translationally, glycosylation at Ser-185 modulates the phosphorylation of CaMK4 at Thr-196 and negatively regulates its activity toward CREB1 in basal conditions and during early inomycin stimulation. The N-terminus of calspermin is blocked. As to expression, isoform 1 is expressed in brain and isoform 2 is testis specific.

The protein localises to the cytoplasm. It is found in the nucleus. It catalyses the reaction L-seryl-[protein] + ATP = O-phospho-L-seryl-[protein] + ADP + H(+). It carries out the reaction L-threonyl-[protein] + ATP = O-phospho-L-threonyl-[protein] + ADP + H(+). Its activity is regulated as follows. Activated by Ca(2+)/calmodulin. Binding of calmodulin results in conformational change that relieves intrasteric autoinhibition and allows phosphorylation of Thr-196 within the activation loop by CaMKK1 or CaMKK2. Phosphorylation of Thr-196 results in a 10-20-fold increase in total activity to generate Ca(2+)/calmodulin-independent activity. Autophosphorylation of the N-terminus Ser-11 and Ser-12 is required for full activation. Inactivated by protein phosphatase 2A (PPP2CA/PPP2CB) which dephosphorylates Thr-196, thereby terminating autonomous activity and helping to maintain the enzyme in its autoinhibited state. Functionally, calcium/calmodulin-dependent protein kinase that operates in the calcium-triggered CaMKK-CaMK4 signaling cascade and regulates, mainly by phosphorylation, the activity of several transcription activators, such as CREB1, MEF2D, JUN and RORA, which play pivotal roles in immune response, inflammation, and memory consolidation. In the thymus, regulates the CD4(+)/CD8(+) double positive thymocytes selection threshold during T-cell ontogeny. In CD4 memory T-cells, is required to link T-cell antigen receptor (TCR) signaling to the production of IL2, IFNG and IL4 (through the regulation of CREB and MEF2). Regulates the differentiation and survival phases of osteoclasts and dendritic cells (DCs). Mediates DCs survival by linking TLR4 and the regulation of temporal expression of BCL2. Phosphorylates the transcription activator CREB1 on 'Ser-133' in hippocampal neuron nuclei and contribute to memory consolidation and long term potentiation (LTP) in the hippocampus. Can activate the MAP kinases MAPK1/ERK2, MAPK8/JNK1 and MAPK14/p38 and stimulate transcription through the phosphorylation of ELK1 and ATF2. Can also phosphorylate in vitro CREBBP, PRM2, MEF2A and STMN1/OP18. Heat-stable, acidic, calmodulin-binding protein. This chain is Calcium/calmodulin-dependent protein kinase type IV (Camk4), found in Rattus norvegicus (Rat).